Consider the following 367-residue polypeptide: Histidinol-phosphate aminotransferase (367 aa).

Lysine 225 carries the N6-(pyridoxal phosphate)lysine modification.

The protein belongs to the class-II pyridoxal-phosphate-dependent aminotransferase family. Histidinol-phosphate aminotransferase subfamily. Homodimer. Pyridoxal 5'-phosphate is required as a cofactor.

It carries out the reaction L-histidinol phosphate + 2-oxoglutarate = 3-(imidazol-4-yl)-2-oxopropyl phosphate + L-glutamate. It participates in amino-acid biosynthesis; L-histidine biosynthesis; L-histidine from 5-phospho-alpha-D-ribose 1-diphosphate: step 7/9. The polypeptide is Histidinol-phosphate aminotransferase (Hyphomonas neptunium (strain ATCC 15444)).